Consider the following 209-residue polypeptide: Uracil phosphoribosyltransferase (209 aa).

5-phospho-alpha-D-ribose 1-diphosphate is bound by residues Arg-79, Arg-104, and 131-139 (DPMLATGNS). Uracil is bound by residues Ile-194 and 199–201 (GDA). 5-phospho-alpha-D-ribose 1-diphosphate is bound at residue Asp-200.

This sequence belongs to the UPRTase family. Requires Mg(2+) as cofactor.

The catalysed reaction is UMP + diphosphate = 5-phospho-alpha-D-ribose 1-diphosphate + uracil. The protein operates within pyrimidine metabolism; UMP biosynthesis via salvage pathway; UMP from uracil: step 1/1. Allosterically activated by GTP. Functionally, catalyzes the conversion of uracil and 5-phospho-alpha-D-ribose 1-diphosphate (PRPP) to UMP and diphosphate. The sequence is that of Uracil phosphoribosyltransferase from Rhizobium etli (strain CIAT 652).